The chain runs to 898 residues: DNA-directed DNA polymerase (898 aa).

Residues 101 to 337 (YDRKFVRVAN…VQAIDKIRGF (237 aa)) are 3'-5'exonuclease. Positions 112, 114, and 219 each coordinate Mg(2+). The tract at residues 245–261 (VKSKLIQNMYGSKEIYS) is beta hairpin. Residues Asp324, Asp408, and Leu409 each contribute to the Mg(2+) site. Positions 377-898 (IPQQGSHVKQ…EKASLDFLFG (522 aa)) are polymerase. Residues 411–413 (SLY), Arg479, and Lys557 each bind substrate. Position 620 (Asp620) interacts with Mg(2+). A binding of DNA in B-conformation region spans residues 702-705 (KKRY). Residues 893-898 (LDFLFG) form an interaction with the polymerase clamp region.

It belongs to the DNA polymerase type-B family. Interacts with the polymerase clamp; this interaction constitutes the polymerase holoenzyme. Interacts with the helicase assembly factor. Part of the replicase complex that includes the DNA polymerase, the polymerase clamp, the clamp loader complex, the single-stranded DNA binding protein, the primase, the helicase and the helicase assembly factor. Mg(2+) serves as cofactor.

It catalyses the reaction DNA(n) + a 2'-deoxyribonucleoside 5'-triphosphate = DNA(n+1) + diphosphate. Replicates the viral genomic DNA. This polymerase possesses two enzymatic activities: DNA synthesis (polymerase) and an exonucleolytic activity that degrades single-stranded DNA in the 3'- to 5'-direction for proofreading purpose. This Enterobacteria phage T4 (Bacteriophage T4) protein is DNA-directed DNA polymerase (43).